Here is a 143-residue protein sequence, read N- to C-terminus: Transcriptional regulator MraZ (143 aa).

SpoVT-AbrB domains are found at residues 5–47 (QYEH…SLEE) and 76–119 (AVEC…SKEV).

It belongs to the MraZ family. In terms of assembly, forms oligomers.

Its subcellular location is the cytoplasm. It is found in the nucleoid. The chain is Transcriptional regulator MraZ from Thermoanaerobacter pseudethanolicus (strain ATCC 33223 / 39E) (Clostridium thermohydrosulfuricum).